A 428-amino-acid chain; its full sequence is Protein terminus (428 aa).

The C3H1-type zinc finger occupies cysteine 325–cysteine 346.

The protein is Protein terminus (term) of Drosophila melanogaster (Fruit fly).